A 268-amino-acid polypeptide reads, in one-letter code: 4-hydroxy-tetrahydrodipicolinate reductase (268 aa).

Residues 10–15 (GSTGRM), glutamate 36, 99–101 (GTT), and 123–126 (APNM) contribute to the NAD(+) site. The Proton donor/acceptor role is filled by histidine 156. Residue histidine 157 participates in (S)-2,3,4,5-tetrahydrodipicolinate binding. The Proton donor role is filled by lysine 160. 166–167 (GT) contributes to the (S)-2,3,4,5-tetrahydrodipicolinate binding site.

The protein belongs to the DapB family.

The protein localises to the cytoplasm. The enzyme catalyses (S)-2,3,4,5-tetrahydrodipicolinate + NAD(+) + H2O = (2S,4S)-4-hydroxy-2,3,4,5-tetrahydrodipicolinate + NADH + H(+). The catalysed reaction is (S)-2,3,4,5-tetrahydrodipicolinate + NADP(+) + H2O = (2S,4S)-4-hydroxy-2,3,4,5-tetrahydrodipicolinate + NADPH + H(+). The protein operates within amino-acid biosynthesis; L-lysine biosynthesis via DAP pathway; (S)-tetrahydrodipicolinate from L-aspartate: step 4/4. In terms of biological role, catalyzes the conversion of 4-hydroxy-tetrahydrodipicolinate (HTPA) to tetrahydrodipicolinate. The polypeptide is 4-hydroxy-tetrahydrodipicolinate reductase (Nitrosomonas eutropha (strain DSM 101675 / C91 / Nm57)).